Reading from the N-terminus, the 556-residue chain is 2-succinyl-5-enolpyruvyl-6-hydroxy-3-cyclohexene-1-carboxylate synthase (556 aa).

It belongs to the TPP enzyme family. MenD subfamily. As to quaternary structure, homodimer. Requires Mg(2+) as cofactor. Mn(2+) serves as cofactor. It depends on thiamine diphosphate as a cofactor.

The enzyme catalyses isochorismate + 2-oxoglutarate + H(+) = 5-enolpyruvoyl-6-hydroxy-2-succinyl-cyclohex-3-ene-1-carboxylate + CO2. Its pathway is quinol/quinone metabolism; 1,4-dihydroxy-2-naphthoate biosynthesis; 1,4-dihydroxy-2-naphthoate from chorismate: step 2/7. It participates in quinol/quinone metabolism; menaquinone biosynthesis. Functionally, catalyzes the thiamine diphosphate-dependent decarboxylation of 2-oxoglutarate and the subsequent addition of the resulting succinic semialdehyde-thiamine pyrophosphate anion to isochorismate to yield 2-succinyl-5-enolpyruvyl-6-hydroxy-3-cyclohexene-1-carboxylate (SEPHCHC). The polypeptide is 2-succinyl-5-enolpyruvyl-6-hydroxy-3-cyclohexene-1-carboxylate synthase (Escherichia coli (strain ATCC 8739 / DSM 1576 / NBRC 3972 / NCIMB 8545 / WDCM 00012 / Crooks)).